The primary structure comprises 432 residues: Trigger factor (432 aa).

The PPIase FKBP-type domain occupies 161-246; sequence GKRVSIDFVG…VNKVEARQLP (86 aa).

It belongs to the FKBP-type PPIase family. Tig subfamily.

It localises to the cytoplasm. The enzyme catalyses [protein]-peptidylproline (omega=180) = [protein]-peptidylproline (omega=0). Its function is as follows. Involved in protein export. Acts as a chaperone by maintaining the newly synthesized protein in an open conformation. Functions as a peptidyl-prolyl cis-trans isomerase. The chain is Trigger factor from Vibrio vulnificus (strain YJ016).